Here is a 344-residue protein sequence, read N- to C-terminus: Lysophosphatidic acid receptor 6 (344 aa).

The Extracellular portion of the chain corresponds to 1-25 (MVSSNGSQCPYDDSFKYTLYGCMFS). N-linked (GlcNAc...) asparagine glycosylation is present at N5. The chain crosses the membrane as a helical span at residues 26–46 (MVFVLGLISNCVAIYIFICAL). The Cytoplasmic segment spans residues 47 to 56 (KVRNETTTYM). A helical membrane pass occupies residues 57 to 77 (INLAMSDLLFVFTLPFRIFYF). The Extracellular segment spans residues 78 to 90 (ATRNWPFGDLLCK). C89 and C168 are disulfide-bonded. Residues 91 to 111 (ISVMLFYTNMYGSILFLTCIS) traverse the membrane as a helical segment. The Cytoplasmic portion of the chain corresponds to 112 to 134 (VDRFLAIVYPFKSKTLRTKRNAK). The chain crosses the membrane as a helical span at residues 135-155 (IVCIAVWFTVMGGSAPAVFFQ). Topologically, residues 156 to 183 (STHSQGNNTSEACFENFPAATWKTYLSR) are extracellular. N-linked (GlcNAc...) asparagine glycans are attached at residues N162 and N163. The chain crosses the membrane as a helical span at residues 184–204 (IVIFIEIVGFFIPLILNVTCS). At 205–230 (SMVLRTLNKPVTLSRSKMNKTKVLKM) the chain is on the cytoplasmic side. The helical transmembrane segment at 231–251 (IFVHLVIFCFCFVPYNINLIL) threads the bilayer. Residues 252–272 (YSLMRTQTFVNCSVVAAVRTM) are Extracellular-facing. N262 carries an N-linked (GlcNAc...) asparagine glycan. The chain crosses the membrane as a helical span at residues 273–293 (YPITLCIAVSNCCFDPIVYYF). C284 carries S-palmitoyl cysteine lipidation. At 294-344 (TSDTIQNSIKMKNWSVRRSDSRFSEVQGTENFIQHNLQTLKNKIFDNESAI) the chain is on the cytoplasmic side.

This sequence belongs to the G-protein coupled receptor 1 family. Ubiquitously expressed. Detected in the hair follicles and skin (at protein level).

The protein localises to the cell membrane. Functionally, binds to oleoyl-L-alpha-lysophosphatidic acid (LPA). Intracellular cAMP is involved in the receptor activation. Important for the maintenance of hair growth and texture. This chain is Lysophosphatidic acid receptor 6 (Lpar6), found in Mus musculus (Mouse).